The sequence spans 905 residues: Gamma-tubulin complex component 2 (905 aa).

The residue at position 83 (Tyr-83) is a Phosphotyrosine. Residues 877 to 905 are disordered; sequence AERSQKAAPQVPVPRGPSAPAPRVAIPAQ. The span at 887-896 shows a compositional bias: pro residues; that stretch reads VPVPRGPSAP.

It belongs to the TUBGCP family. As to quaternary structure, component of the gamma-tubulin ring complex (gTuRC) consisting of TUBGCP2, TUBGCP3, TUBGCP4, TUBGCP5 and TUBGCP6 and gamma-tubulin TUBG1 or TUBG2. TUBGCP2, TUBGCP3, TUBGCP4, TUBGCP5 and TUBGCP6 assemble in a 5:5:2:1:1 stoichiometry; each is associated with a gamma-tubulin, thereby arranging 14 gamma-tubulins in a helical manner. Gamma-tubulin at the first position is blocked by TUBGCP3 at the last position, allowing 13 protafilaments to grow into a microtubule. The gTuRC (via TUBGCP3 and TUBGCP6) interacts with ACTB and MZT1; the interactions form a luminal bridge that stabilizes the initial structure during complex assembly. The gTuRC (via TUBGCP2) interacts with MZT2A/MZT2B and CDK5RAP2 (via CM1 motif); the interactions play a role in gTuRC activation. Interacts with ATF5; the ATF5:PCNT:polyglutamylated tubulin (PGT) tripartite unites the mother centriole and the pericentriolar material (PCM) in the centrosome.

It is found in the cytoplasm. It localises to the cytoskeleton. Its subcellular location is the microtubule organizing center. The protein localises to the centrosome. In terms of biological role, component of the gamma-tubulin ring complex (gTuRC) which mediates microtubule nucleation. The gTuRC regulates the minus-end nucleation of alpha-beta tubulin heterodimers that grow into microtubule protafilaments, a critical step in centrosome duplication and spindle formation. Plays a role in neuronal migration. This chain is Gamma-tubulin complex component 2 (Tubgcp2), found in Mus musculus (Mouse).